Consider the following 322-residue polypeptide: Gas vesicle protein L (322 aa).

The segment at 1 to 85 (MTEQSSGSAT…SEQATVDWST (85 aa)) is disordered. A compositionally biased stretch (basic and acidic residues) spans 17-36 (ETAKQETGRKNEQPEERTVT). Positions 45–57 (INTTTAESETGSE) are enriched in polar residues. Basic and acidic residues predominate over residues 58-72 (QESKAGSEQESKAGS). Residues 73–85 (EQESEQATVDWST) are compositionally biased toward polar residues.

It belongs to the gas vesicle GvpF/GvpL family. In terms of assembly, gvpF to GvpM interact with each other in vitro, and may form multi-subunit complex(es). Interacts with GvpC, GvpN and GvpO.

Its subcellular location is the gas vesicle. In terms of biological role, proteins GvpF to GvpM might be involved in nucleating gas vesicle formation. A minor component of the gas vesicle. Gas vesicles are small, hollow, gas filled protein structures that are found in several microbial planktonic microorganisms. They allow positioning of halobacteria at the optimal depth for growth in the poorly aerated, shallow brine pools of their habitat. Expression of a 9.5 kb mc-vac DNA fragment containing 2 divergently transcribed regions (gvpD-gvpE-gvpF-gvpG-gvpH-gvpI-gvpJ-gvpK-gvpL-gvpM and gvpA-gvpC-gvpN-gvpO) allows H.volcanii to produce gas vesicles. This Haloferax mediterranei (strain ATCC 33500 / DSM 1411 / JCM 8866 / NBRC 14739 / NCIMB 2177 / R-4) (Halobacterium mediterranei) protein is Gas vesicle protein L.